A 673-amino-acid polypeptide reads, in one-letter code: DNA ligase (673 aa).

Residues 36 to 40 (DAEYD), 85 to 86 (SL), and Glu116 contribute to the NAD(+) site. Lys118 (N6-AMP-lysine intermediate) is an active-site residue. NAD(+) contacts are provided by Arg139, Glu176, Lys291, and Lys315. Positions 409, 412, 427, and 433 each coordinate Zn(2+). The 82-residue stretch at 592-673 (RGEQPLAGRT…LQALLQEHGR (82 aa)) folds into the BRCT domain.

The protein belongs to the NAD-dependent DNA ligase family. LigA subfamily. The cofactor is Mg(2+). Requires Mn(2+) as cofactor.

The enzyme catalyses NAD(+) + (deoxyribonucleotide)n-3'-hydroxyl + 5'-phospho-(deoxyribonucleotide)m = (deoxyribonucleotide)n+m + AMP + beta-nicotinamide D-nucleotide.. DNA ligase that catalyzes the formation of phosphodiester linkages between 5'-phosphoryl and 3'-hydroxyl groups in double-stranded DNA using NAD as a coenzyme and as the energy source for the reaction. It is essential for DNA replication and repair of damaged DNA. The sequence is that of DNA ligase from Alkalilimnicola ehrlichii (strain ATCC BAA-1101 / DSM 17681 / MLHE-1).